The primary structure comprises 345 residues: Heat-inducible transcription repressor HrcA (345 aa).

Belongs to the HrcA family.

In terms of biological role, negative regulator of class I heat shock genes (grpE-dnaK-dnaJ and groELS operons). Prevents heat-shock induction of these operons. This chain is Heat-inducible transcription repressor HrcA, found in Listeria monocytogenes serotype 1/2a (strain 10403S).